The chain runs to 365 residues: Chorismate synthase (365 aa).

Arg48 provides a ligand contact to NADP(+). FMN contacts are provided by residues 125 to 127, 238 to 239, Gly278, 293 to 297, and Arg319; these read RSS, NA, and KPTSS.

This sequence belongs to the chorismate synthase family. As to quaternary structure, homotetramer. It depends on FMNH2 as a cofactor.

It catalyses the reaction 5-O-(1-carboxyvinyl)-3-phosphoshikimate = chorismate + phosphate. Its pathway is metabolic intermediate biosynthesis; chorismate biosynthesis; chorismate from D-erythrose 4-phosphate and phosphoenolpyruvate: step 7/7. Catalyzes the anti-1,4-elimination of the C-3 phosphate and the C-6 proR hydrogen from 5-enolpyruvylshikimate-3-phosphate (EPSP) to yield chorismate, which is the branch point compound that serves as the starting substrate for the three terminal pathways of aromatic amino acid biosynthesis. This reaction introduces a second double bond into the aromatic ring system. This is Chorismate synthase from Marinomonas sp. (strain MWYL1).